The sequence spans 143 residues: Transcriptional regulator MraZ (143 aa).

SpoVT-AbrB domains are found at residues 5–47 (EYNH…SSDE) and 76–119 (ASEC…SNVE).

It belongs to the MraZ family. In terms of assembly, forms oligomers.

Its subcellular location is the cytoplasm. The protein localises to the nucleoid. This is Transcriptional regulator MraZ from Alkaliphilus oremlandii (strain OhILAs) (Clostridium oremlandii (strain OhILAs)).